Here is a 406-residue protein sequence, read N- to C-terminus: Acetate kinase (406 aa).

N10 provides a ligand contact to Mg(2+). K17 lines the ATP pocket. A substrate-binding site is contributed by R92. The Proton donor/acceptor role is filled by D151. ATP-binding positions include 211–215, 286–288, and 335–339; these read HLGSG, DFR, and GIGEN. A Mg(2+)-binding site is contributed by E389.

This sequence belongs to the acetokinase family. As to quaternary structure, homodimer. Mg(2+) is required as a cofactor. Requires Mn(2+) as cofactor.

The protein localises to the cytoplasm. The enzyme catalyses acetate + ATP = acetyl phosphate + ADP. Its pathway is metabolic intermediate biosynthesis; acetyl-CoA biosynthesis; acetyl-CoA from acetate: step 1/2. In terms of biological role, catalyzes the formation of acetyl phosphate from acetate and ATP. Can also catalyze the reverse reaction. The protein is Acetate kinase of Buchnera aphidicola subsp. Cinara cedri (strain Cc).